Reading from the N-terminus, the 596-residue chain is Probable tripeptidyl-peptidase SED2 (596 aa).

The first 16 residues, 1–16, serve as a signal peptide directing secretion; that stretch reads MRLLKFVCLLASVAAA. Residues 17 to 203 constitute a propeptide, removed in mature form; that stretch reads KPTPGASHKV…LESMSVEEFA (187 aa). The Peptidase S53 domain occupies 210–596; sequence LVTTACLREL…NFQALTKVLP (387 aa). A glycan (N-linked (GlcNAc...) asparagine) is linked at N265. Residues E286 and D290 each act as charge relay system in the active site. An N-linked (GlcNAc...) asparagine glycan is attached at N403. Residue S501 is the Charge relay system of the active site. Positions 543 and 544 each coordinate Ca(2+). N-linked (GlcNAc...) asparagine glycosylation occurs at N572. Residues G576 and D578 each coordinate Ca(2+).

It depends on Ca(2+) as a cofactor.

The protein localises to the secreted. The protein resides in the extracellular space. The catalysed reaction is Release of an N-terminal tripeptide from a polypeptide.. Functionally, secreted tripeptidyl-peptidase which degrades proteins at acidic pHs and is involved in virulence. In Arthroderma benhamiae (strain ATCC MYA-4681 / CBS 112371) (Trichophyton mentagrophytes), this protein is Probable tripeptidyl-peptidase SED2 (SED2).